A 236-amino-acid polypeptide reads, in one-letter code: UPF0257 lipoprotein YnfC (236 aa).

The signal sequence occupies residues 1 to 16 (MKYKLLPCLLAILLTG). The N-palmitoyl cysteine moiety is linked to residue Cys17. A lipid anchor (S-diacylglycerol cysteine) is attached at Cys17.

The protein belongs to the UPF0257 family.

Its subcellular location is the cell membrane. This chain is UPF0257 lipoprotein YnfC, found in Escherichia coli O127:H6 (strain E2348/69 / EPEC).